Reading from the N-terminus, the 77-residue chain is Translation initiation factor IF-1, chloroplastic (77 aa).

Residues 1–71 (MKEQKWIHEG…SRGRIIYRLR (71 aa)) enclose the S1-like domain.

It belongs to the IF-1 family. In terms of assembly, component of the 30S ribosomal translation pre-initiation complex which assembles on the 30S ribosome in the order IF-2 and IF-3, IF-1 and N-formylmethionyl-tRNA(fMet); mRNA recruitment can occur at any time during PIC assembly.

The protein localises to the plastid. Its subcellular location is the chloroplast. One of the essential components for the initiation of protein synthesis. Stabilizes the binding of IF-2 and IF-3 on the 30S subunit to which N-formylmethionyl-tRNA(fMet) subsequently binds. Helps modulate mRNA selection, yielding the 30S pre-initiation complex (PIC). Upon addition of the 50S ribosomal subunit IF-1, IF-2 and IF-3 are released leaving the mature 70S translation initiation complex. This chain is Translation initiation factor IF-1, chloroplastic, found in Buxus microphylla (Littleleaf boxwood).